The primary structure comprises 855 residues: Inactive rhomboid protein 1 (855 aa).

The Cytoplasmic portion of the chain corresponds to 1–411 (MSEARRDSTS…HRPFFTYWLT (411 aa)). Ser76 and Ser176 each carry phosphoserine. A phosphothreonine mark is found at Thr180 and Thr183. The residue at position 390 (Ser390) is a Phosphoserine. The chain crosses the membrane as a helical span at residues 412–432 (FVHSLVTILAVCIYGIAPVGF). The Lumenal portion of the chain corresponds to 433 to 655 (SQHETVDSVL…NPEVPDQFYR (223 aa)). Asn583 carries N-linked (GlcNAc...) asparagine glycosylation. Residues 656–676 (LWLSLFLHAGILHCLVSICFQ) form a helical membrane-spanning segment. The Cytoplasmic portion of the chain corresponds to 677-691 (MTVLRDLEKLAGWHR). A helical membrane pass occupies residues 692-712 (IAIIYLLSGVTGNLASAIFLP). At 713 to 714 (YR) the chain is on the lumenal side. The chain crosses the membrane as a helical span at residues 715–735 (AEVGPAGSQFGILACLFVELF). Over 736–746 (QSWQILARPWR) the chain is Cytoplasmic. Residues 747–767 (AFFKLLAVVLFLFTFGLLPWI) traverse the membrane as a helical segment. Residues 768–772 (DNFAH) lie on the Lumenal side of the membrane. Residues 773-793 (ISGFISGLFLSFAFLPYISFG) form a helical membrane-spanning segment. At 794–803 (KFDLYRKRCQ) the chain is on the cytoplasmic side. A helical transmembrane segment spans residues 804 to 824 (IIIFQVVFLGLLAGLVVLFYV). Over 825 to 855 (YPVRCEWCEFLTCIPFTDKFCEKYELDAQLH) the chain is Lumenal.

It belongs to the peptidase S54 family. In terms of assembly, homodimer, or homooligomer. Interacts with TGFA and HBEGF. Interacts with EGF; may retain EGF in the endoplasmic reticulum and regulates its degradation through the endoplasmic reticulum-associated degradation (ERAD). Interacts (via cytoplasmic N-terminus) with FRMD8/iTAP; this interaction leads to mutual protein stabilization. Interacts with ADAM17/TACE. In terms of processing, N-glycosylated. In terms of tissue distribution, highly expressed in cerebellum, cerebrum, heart, skeletal muscle, placenta, pancreatic islet and testis. Detected at lower levels in colon, kidney, small intestine and lung.

The protein localises to the endoplasmic reticulum membrane. It localises to the golgi apparatus membrane. Functionally, regulates ADAM17 protease, a sheddase of the epidermal growth factor (EGF) receptor ligands and TNF, thereby plays a role in sleep, cell survival, proliferation, migration and inflammation. Does not exhibit any protease activity on its own. The protein is Inactive rhomboid protein 1 (RHBDF1) of Homo sapiens (Human).